The following is a 481-amino-acid chain: Matrix metalloproteinase-20 (481 aa).

The N-terminal stretch at 1 to 20 (MLPASGLAVLLVTALKFSTA) is a signal peptide. The propeptide occupies 21-105 (APSLPAASPR…PRCGVPDVAN (85 aa)). N-linked (GlcNAc...) asparagine glycosylation is present at N64. Residues 96 to 103 (PRCGVPDV) carry the Cysteine switch motif. C98 contributes to the Zn(2+) binding site. Positions 162, 163, and 164 each coordinate Ca(2+). Positions 174 and 176 each coordinate Zn(2+). Residues D181, G182, R184, and T186 each coordinate Ca(2+). Residue H189 participates in Zn(2+) binding. Ca(2+) contacts are provided by E195, G196, G198, and D200. H202 contributes to the Zn(2+) binding site. Ca(2+)-binding residues include D204 and E207. H224 contributes to the Zn(2+) binding site. E225 is a catalytic residue. 2 residues coordinate Zn(2+): H228 and H234. Hemopexin repeat units follow at residues 291 to 341 (PDLC…FPQL), 342 to 387 (MSNV…GFPR), 389 to 437 (VQRI…FSGV), and 438 to 481 (NGQI…WIGC). C294 and C481 are disulfide-bonded. An N-linked (GlcNAc...) asparagine glycan is attached at N297.

This sequence belongs to the peptidase M10A family. Zn(2+) is required as a cofactor. Ca(2+) serves as cofactor. Autoactivates at least at the 105-Asn-|-Tyr-106 site. As to expression, expressed in the enamel organ.

The protein resides in the secreted. It is found in the extracellular space. It localises to the extracellular matrix. Its function is as follows. Degrades amelogenin, the major protein component of the enamel matrix and two of the macromolecules characterizing the cartilage extracellular matrix: aggrecan and the cartilage oligomeric matrix protein (COMP). May play a central role in tooth enamel formation. Cleaves aggrecan at the '360-Ser-|-Phe-361' site. In Bos taurus (Bovine), this protein is Matrix metalloproteinase-20 (MMP20).